The primary structure comprises 299 residues: Circadian clock oscillator protein KaiA (299 aa).

The 169-residue stretch at 1 to 169 folds into the KaiA N-terminal domain; sequence MVSKLSLYLV…RLAEKLRERL (169 aa). The psR domain, binds oxidized quinones stretch occupies residues 3–135; it reads SKLSLYLVTP…LHLAPSCALS (133 aa). Residues 170-178 form a flexible linker region; the sequence is GYLGVYYKR. Residues 179–287 form the KaiA C-terminal domain; sequence NPKYFYRSLS…CEMYRRSIPR (109 aa).

As to quaternary structure, homodimer. The KaiABC complex composition changes during the circadian cycle to control KaiC phosphorylation. Complexes KaiC(6), KaiA(2-4):KaiC(6), KaiB(6):KaiC(6) and KaiC(6):KaiB(6):KaiA(12) are among the most important forms, many form cooperatively. KaiA and CikA bind to the same region of the KaiB(fs) form and therefore compete.

Functionally, key component of the KaiABC oscillator complex, which constitutes the main circadian regulator in cyanobacteria. Complex composition changes during the circadian cycle to control KaiC phosphorylation. KaiA stimulates KaiC autophosphorylation, while KaiB sequesters KaiA, leading to KaiC autodephosphorylation. KaiA binding to the KaiC CII domain during the subjective day yields KaiA(2-4):KaiC(6) complexes which stimulate KaiC autophosphorylation. Phospho-Ser-431 KaiC accumulation triggers binding of KaiB during the subjective night to form the KaiB(6):KaiC(6) complex, leading to changes in the output regulators CikA and SasA. KaiB(6):KaiC(6) formation exposes a site for KaiA binding on KaiB that sequesters KaiA from KaiC's CII domain, making the KaiC(6):KaiB(6):KaiA(12) complex resulting in KaiC autodephosphorylation. Complete dephosphorylation of KaiC leads to dissociation of KaiA(2):KaiB(1), completing 1 cycle of the Kai oscillator. Its function is as follows. Binds oxidized quinones via the N-terminal PsR domain, allowing it to sense redox changes and possibly mediate clock input. This is Circadian clock oscillator protein KaiA from Picosynechococcus sp. (strain ATCC 27264 / PCC 7002 / PR-6) (Agmenellum quadruplicatum).